Here is a 268-residue protein sequence, read N- to C-terminus: Chymotrypsin-C (268 aa).

The signal sequence occupies residues 1 to 16 (MLGITVLAAILACASC). Residues 17–29 (CGNPAFPPNLSTR) constitute a propeptide, activation peptide. Disulfide bonds link cysteine 17-cysteine 141, cysteine 59-cysteine 75, cysteine 155-cysteine 222, cysteine 186-cysteine 202, and cysteine 212-cysteine 243. Asparagine 25 carries N-linked (GlcNAc...) asparagine glycosylation. The Peptidase S1 domain occupies 30–267 (VVGGEDAVPN…YNDWINEKIQ (238 aa)). Histidine 74 functions as the Charge relay system in the catalytic mechanism. An N-linked (GlcNAc...) asparagine glycan is attached at asparagine 90. The Charge relay system role is filled by aspartate 121. The active-site Charge relay system is the serine 216.

It belongs to the peptidase S1 family. Elastase subfamily. Pancreas.

The enzyme catalyses Preferential cleavage: Leu-|-Xaa, Tyr-|-Xaa, Phe-|-Xaa, Met-|-Xaa, Trp-|-Xaa, Gln-|-Xaa, Asn-|-Xaa.. Its function is as follows. Regulates activation and degradation of trypsinogens and procarboxypeptidases by targeting specific cleavage sites within their zymogen precursors. Has chymotrypsin-type protease activity and hypocalcemic activity. Cleaves TRY4 and TRY5 and thereby inhibits their autoactivation. The chain is Chymotrypsin-C (Ctrc) from Rattus norvegicus (Rat).